Here is a 66-residue protein sequence, read N- to C-terminus: Large ribosomal subunit protein bL33c (66 aa).

The protein belongs to the bacterial ribosomal protein bL33 family.

It localises to the plastid. It is found in the chloroplast. The chain is Large ribosomal subunit protein bL33c from Welwitschia mirabilis (Tree tumbo).